The chain runs to 167 residues: Endoribonuclease YbeY (167 aa).

Positions 131, 135, and 141 each coordinate Zn(2+).

Belongs to the endoribonuclease YbeY family. Zn(2+) serves as cofactor.

The protein localises to the cytoplasm. Its function is as follows. Single strand-specific metallo-endoribonuclease involved in late-stage 70S ribosome quality control and in maturation of the 3' terminus of the 16S rRNA. The protein is Endoribonuclease YbeY of Rickettsia rickettsii (strain Sheila Smith).